Here is a 595-residue protein sequence, read N- to C-terminus: Beta-lactamase-like protein ARB_00930 (595 aa).

A signal peptide spans Met-1–Ser-18. Asn-70 and Asn-102 each carry an N-linked (GlcNAc...) asparagine glycan. Ser-117 acts as the Acyl-ester intermediate in catalysis. 3 N-linked (GlcNAc...) asparagine glycosylation sites follow: Asn-147, Asn-156, and Asn-195. Tyr-235 serves as the catalytic Proton acceptor. 3 N-linked (GlcNAc...) asparagine glycosylation sites follow: Asn-249, Asn-461, and Asn-473.

The protein belongs to the beta-lactamase family.

Its subcellular location is the secreted. It catalyses the reaction a beta-lactam + H2O = a substituted beta-amino acid. This is Beta-lactamase-like protein ARB_00930 from Arthroderma benhamiae (strain ATCC MYA-4681 / CBS 112371) (Trichophyton mentagrophytes).